The sequence spans 459 residues: Methionine aminopeptidase 2-2 (459 aa).

Over residues 1–12 the composition is skewed to basic and acidic residues; the sequence is MGSKSPEDHRQG. A disordered region spans residues 1–87; the sequence is MGSKSPEDHR…KKLSVVQQTS (87 aa). The span at 43 to 54 shows a compositional bias: acidic residues; that stretch reads GQDEDGDDDDDE. Over residues 55 to 66 the composition is skewed to basic and acidic residues; it reads KTGIDLKTNDGA. The segment covering 67 to 79 has biased composition (basic residues); the sequence is KKKRKRNKKKSKK. H210 is a binding site for substrate. A divalent metal cation is bound by residues D231, D242, and H311. H319 provides a ligand contact to substrate. E344 and E440 together coordinate a divalent metal cation.

It belongs to the peptidase M24A family. Methionine aminopeptidase eukaryotic type 2 subfamily. Requires Co(2+) as cofactor. The cofactor is Zn(2+). It depends on Mn(2+) as a cofactor. Fe(2+) serves as cofactor.

Its subcellular location is the cytoplasm. The enzyme catalyses Release of N-terminal amino acids, preferentially methionine, from peptides and arylamides.. In terms of biological role, cotranslationally removes the N-terminal methionine from nascent proteins. The N-terminal methionine is often cleaved when the second residue in the primary sequence is small and uncharged (Met-Ala-, Cys, Gly, Pro, Ser, Thr, or Val). The polypeptide is Methionine aminopeptidase 2-2 (Pyrenophora teres f. teres (strain 0-1) (Barley net blotch fungus)).